Here is a 166-residue protein sequence, read N- to C-terminus: Phosphopantetheine adenylyltransferase (166 aa).

S9 contributes to the substrate binding site. ATP-binding positions include 9-10 (SF) and H17. 3 residues coordinate substrate: K41, T74, and R88. ATP-binding positions include 89 to 91 (GLR), E99, and 124 to 130 (DSFISSS).

This sequence belongs to the bacterial CoaD family. As to quaternary structure, homohexamer. The cofactor is Mg(2+).

It is found in the cytoplasm. It carries out the reaction (R)-4'-phosphopantetheine + ATP + H(+) = 3'-dephospho-CoA + diphosphate. It participates in cofactor biosynthesis; coenzyme A biosynthesis; CoA from (R)-pantothenate: step 4/5. Functionally, reversibly transfers an adenylyl group from ATP to 4'-phosphopantetheine, yielding dephospho-CoA (dPCoA) and pyrophosphate. The polypeptide is Phosphopantetheine adenylyltransferase (Lactobacillus gasseri (strain ATCC 33323 / DSM 20243 / BCRC 14619 / CIP 102991 / JCM 1131 / KCTC 3163 / NCIMB 11718 / NCTC 13722 / AM63)).